The primary structure comprises 122 residues: Large ribosomal subunit protein uL14 (122 aa).

Belongs to the universal ribosomal protein uL14 family. As to quaternary structure, part of the 50S ribosomal subunit. Forms a cluster with proteins L3 and L19. In the 70S ribosome, L14 and L19 interact and together make contacts with the 16S rRNA in bridges B5 and B8.

Functionally, binds to 23S rRNA. Forms part of two intersubunit bridges in the 70S ribosome. This Bacillus subtilis (strain 168) protein is Large ribosomal subunit protein uL14.